The following is a 115-amino-acid chain: NADH-ubiquinone oxidoreductase chain 3 (115 aa).

3 helical membrane passes run 4-24 (ALTLFTNTALASLLVLIAFWL), 55-75 (FFLVAITFLLFDLEIALLLPL), and 84-104 (LTTMLTMALLLISLLAASLAY).

The protein belongs to the complex I subunit 3 family. Core subunit of respiratory chain NADH dehydrogenase (Complex I) which is composed of 45 different subunits. Interacts with TMEM186. Interacts with TMEM242.

The protein resides in the mitochondrion inner membrane. The catalysed reaction is a ubiquinone + NADH + 5 H(+)(in) = a ubiquinol + NAD(+) + 4 H(+)(out). Functionally, core subunit of the mitochondrial membrane respiratory chain NADH dehydrogenase (Complex I) which catalyzes electron transfer from NADH through the respiratory chain, using ubiquinone as an electron acceptor. Essential for the catalytic activity of complex I. The sequence is that of NADH-ubiquinone oxidoreductase chain 3 from Phoca vitulina (Harbor seal).